Reading from the N-terminus, the 691-residue chain is Elongation factor G (691 aa).

The region spanning 8 to 282 (ERVRNIGIAA…AVIDYLPAPV (275 aa)) is the tr-type G domain. Residues 17-24 (AHIDAGKT), 81-85 (DTPGH), and 135-138 (NKMD) contribute to the GTP site.

Belongs to the TRAFAC class translation factor GTPase superfamily. Classic translation factor GTPase family. EF-G/EF-2 subfamily.

It is found in the cytoplasm. Catalyzes the GTP-dependent ribosomal translocation step during translation elongation. During this step, the ribosome changes from the pre-translocational (PRE) to the post-translocational (POST) state as the newly formed A-site-bound peptidyl-tRNA and P-site-bound deacylated tRNA move to the P and E sites, respectively. Catalyzes the coordinated movement of the two tRNA molecules, the mRNA and conformational changes in the ribosome. The chain is Elongation factor G from Synechococcus sp. (strain CC9605).